We begin with the raw amino-acid sequence, 255 residues long: tRNA pseudouridine synthase B (255 aa).

The active-site Nucleophile is aspartate 52. Tyrosine 80, tyrosine 183, and leucine 204 together coordinate substrate.

It belongs to the pseudouridine synthase TruB family. Type 1 subfamily.

The enzyme catalyses uridine(55) in tRNA = pseudouridine(55) in tRNA. Functionally, responsible for synthesis of pseudouridine from uracil-55 in the psi GC loop of transfer RNAs. The polypeptide is tRNA pseudouridine synthase B (Blochmanniella floridana).